Here is a 90-residue protein sequence, read N- to C-terminus: MARMVQCIKLNKEAEGLDFPPLPGELGKKIWQSVSKEAWAGWLKHQTMLINENRLNMADARARQYLLKQTEKYFFGEGADEAAGYVPPQA.

This sequence belongs to the Fe(2+)-trafficking protein family.

Functionally, could be a mediator in iron transactions between iron acquisition and iron-requiring processes, such as synthesis and/or repair of Fe-S clusters in biosynthetic enzymes. This chain is Probable Fe(2+)-trafficking protein, found in Cupriavidus pinatubonensis (strain JMP 134 / LMG 1197) (Cupriavidus necator (strain JMP 134)).